The following is a 344-amino-acid chain: N-acetyl-gamma-glutamyl-phosphate reductase (344 aa).

Residue cysteine 150 is part of the active site.

The protein belongs to the NAGSA dehydrogenase family. Type 1 subfamily.

Its subcellular location is the cytoplasm. The enzyme catalyses N-acetyl-L-glutamate 5-semialdehyde + phosphate + NADP(+) = N-acetyl-L-glutamyl 5-phosphate + NADPH + H(+). Its pathway is amino-acid biosynthesis; L-arginine biosynthesis; N(2)-acetyl-L-ornithine from L-glutamate: step 3/4. Functionally, catalyzes the NADPH-dependent reduction of N-acetyl-5-glutamyl phosphate to yield N-acetyl-L-glutamate 5-semialdehyde. The chain is N-acetyl-gamma-glutamyl-phosphate reductase from Pseudomonas paraeruginosa (strain DSM 24068 / PA7) (Pseudomonas aeruginosa (strain PA7)).